We begin with the raw amino-acid sequence, 440 residues long: uncharacterized protein (440 aa).

Positions 1–29 (MLRLQMMEGLIVKRTLLLILLLVISVSYA) are cleaved as a signal peptide.

Belongs to the Mj S-layer protein family.

This is an uncharacterized protein from Methanocaldococcus jannaschii (strain ATCC 43067 / DSM 2661 / JAL-1 / JCM 10045 / NBRC 100440) (Methanococcus jannaschii).